The primary structure comprises 45 residues: Photosystem II reaction center protein K (45 aa).

A propeptide spanning residues 1-8 is cleaved from the precursor; that stretch reads MNSALFLA. Residues 23–43 traverse the membrane as a helical segment; the sequence is ILPVIPVFFLLLAFVWQAAIG.

This sequence belongs to the PsbK family. As to quaternary structure, PSII is composed of 1 copy each of membrane proteins PsbA, PsbB, PsbC, PsbD, PsbE, PsbF, PsbH, PsbI, PsbJ, PsbK, PsbL, PsbM, PsbT, PsbX, PsbY, PsbZ, Psb30/Ycf12, at least 3 peripheral proteins of the oxygen-evolving complex and a large number of cofactors. It forms dimeric complexes.

The protein resides in the plastid. The protein localises to the chloroplast thylakoid membrane. Its function is as follows. One of the components of the core complex of photosystem II (PSII). PSII is a light-driven water:plastoquinone oxidoreductase that uses light energy to abstract electrons from H(2)O, generating O(2) and a proton gradient subsequently used for ATP formation. It consists of a core antenna complex that captures photons, and an electron transfer chain that converts photonic excitation into a charge separation. The chain is Photosystem II reaction center protein K from Porphyra purpurea (Red seaweed).